The sequence spans 444 residues: P2X purinoceptor 5 (444 aa).

The Cytoplasmic portion of the chain corresponds to 1 to 30 (MGQAGCKGLCLSLFDYKTEKYVIAKNKKVG). A helical membrane pass occupies residues 31-51 (LLYRLLQASILAYLVVWVFLI). Residues 52-319 (KKGYQDVDTS…RTLMKAYGIR (268 aa)) lie on the Extracellular side of the membrane. N-linked (GlcNAc...) asparagine glycosylation occurs at Asn77. Disulfide bonds link Cys118–Cys169, Cys129–Cys152, and Cys135–Cys163. Asn202 carries N-linked (GlcNAc...) asparagine glycosylation. Cystine bridges form between Cys220–Cys229 and Cys263–Cys272. Residues 320–362 (FDVMVNGKAGKFSIIPTIINVGSGVALMGAGAFFCDLVLIYLI) form a helical membrane-spanning segment. Residues 363 to 444 (KKREFYRDKK…PQLLEPHRST (82 aa)) lie on the Cytoplasmic side of the membrane. Residues 378–444 (GLEDSSQEAE…PQLLEPHRST (67 aa)) are disordered.

This sequence belongs to the P2X receptor family. Functional P2XRs are organized as homomeric and heteromeric trimers. Homotrimer. Forms heterotrimer with P2RX1. Expressed at high levels in brain and immune system.

The protein resides in the cell membrane. It catalyses the reaction Na(+)(in) = Na(+)(out). It carries out the reaction Ca(2+)(in) = Ca(2+)(out). The enzyme catalyses chloride(in) = chloride(out). Its activity is regulated as follows. Activated by ATP. Slowly desensitizing. Sensitive to the ATP agonist alpha/beta-methylene-ATP. In terms of biological role, ATP-gated nonselective transmembrane cation channel permeable to potassium, sodium and calcium. Unlike other P2RX receptors, the P2X5 receptor is also permeable to chloride. May play a supporting role in the inflammatory response. Functionally, non-functional. The sequence is that of P2X purinoceptor 5 from Homo sapiens (Human).